A 371-amino-acid chain; its full sequence is Glycosyltransferase 8 domain-containing protein 1 (371 aa).

At 1–7 (MSFRKVN) the chain is on the cytoplasmic side. A helical; Signal-anchor for type II membrane protein membrane pass occupies residues 8–28 (IIIWVLAVVLFLLVLHHNFLS). The Lumenal segment spans residues 29–371 (LSSLLKNDIS…RRHMDTSNIK (343 aa)). N-linked (GlcNAc...) asparagine glycosylation is present at Asn257.

It belongs to the glycosyltransferase 8 family.

The protein resides in the membrane. The sequence is that of Glycosyltransferase 8 domain-containing protein 1 (Glt8d1) from Mus musculus (Mouse).